We begin with the raw amino-acid sequence, 550 residues long: Methionine--tRNA ligase (550 aa).

A 'HIGH' region motif is present at residues proline 13–histidine 23. Positions 145, 148, 158, and 161 each coordinate Zn(2+). The 'KMSKS' region signature appears at glutamine 331–serine 335. Residue lysine 334 coordinates ATP.

Belongs to the class-I aminoacyl-tRNA synthetase family. MetG type 1 subfamily. In terms of assembly, monomer. Zn(2+) serves as cofactor.

It is found in the cytoplasm. The catalysed reaction is tRNA(Met) + L-methionine + ATP = L-methionyl-tRNA(Met) + AMP + diphosphate. In terms of biological role, is required not only for elongation of protein synthesis but also for the initiation of all mRNA translation through initiator tRNA(fMet) aminoacylation. In Chlamydia trachomatis serovar L2b (strain UCH-1/proctitis), this protein is Methionine--tRNA ligase.